Reading from the N-terminus, the 471-residue chain is Variant surface glycoprotein ILTAT 1.21 (471 aa).

An N-terminal signal peptide occupies residues 1–21; the sequence is MLRALLPSTTLALILAGGGHA. 2 N-linked (GlcNAc...) asparagine glycosylation sites follow: Asn-64 and Asn-405. Residues 406 to 449 are disordered; the sequence is ATADECPETRCEYDSEKNECRPKKGTETTATGPGERTTPADGKA. Residues 412 to 431 show a composition bias toward basic and acidic residues; the sequence is PETRCEYDSEKNECRPKKGT. A glycan (N-linked (GlcNAc...) asparagine) is linked at Asn-450. The GPI-anchor amidated serine moiety is linked to residue Ser-454. Positions 455 to 471 are cleaved as a propeptide — removed in mature form; sequence DSLLIKTSPLWLAFLLF.

It is found in the cell membrane. In terms of biological role, VSG forms a coat on the surface of the parasite. The trypanosome evades the immune response of the host by expressing a series of antigenically distinct VSGs from an estimated 1000 VSG genes. This chain is Variant surface glycoprotein ILTAT 1.21, found in Trypanosoma brucei brucei.